The primary structure comprises 384 residues: Cyclohexane-1-carbonyl-CoA dehydrogenase (384 aa).

It belongs to the acyl-CoA dehydrogenase family. As to quaternary structure, homotetramer. It depends on FAD as a cofactor.

The enzyme catalyses cyclohexane-1-carbonyl-CoA + oxidized [electron-transfer flavoprotein] + H(+) = cyclohex-1-ene-1-carbonyl-CoA + reduced [electron-transfer flavoprotein]. Functionally, mediates the conversion of cyclohexane-1-carbonyl-CoA (ChCoA) into cyclohex-1-ene-1-carbonyl-CoA in biosynthesis of cyclohexane-1-carboxylate, a by-product produced during fermentation of benzoate and crotonate to acetate. The sequence is that of Cyclohexane-1-carbonyl-CoA dehydrogenase from Syntrophus aciditrophicus (strain SB).